The sequence spans 736 residues: MSKPSNTPPLPKDGERNILITSALPYVNNVPHLGNIIGCVLSADVYARYCRLKNYNCIYICGTDEYGTATETKALSEGCTPKEICDKYHEIHKEIYEWFNISFDKFGRTSTNSQTEIAQDIFNKIKDNGYTLTQEIEQLYCEQTCKMFLADRFVEGTCPHCKFEDARGDQCDGCSKLLNPTELINPRCKVCSKPPVIKSTKHIFIDLPQLQQQVDQFVETNSKGGNWSENSIAITNTWVKGELKPRCITRDLKWGTPVPMEEFKDKVFYVWFDAPIGYISITAEYTNEWEKWWKNPENVKLVQFMGKDNVPFHTVIFPASLIGSKDNYTLLNNLSTTEFLNYETGKFSKSRNTGVFGDGAKATGIPSEVWRFYLLNNRPESSDSIFSWDDFNFKNNELLNNFGNLVNRVLKMLNTNAAFNGVVPKIGELNEVDKKLVQEVDEHLVQYFQKLEEISLKEGLKIAMSISKLGNTYMQDNKPWDLSGKDNERCGQVLAILINLIKLLSTLLEPYIPSLTDKVHQQLNVEPTKYSTHFDINAIPAGHEISKEILPLVKKIEADDLKKWRTKFSGIGPEFPIDMKIATVLEVNDHPSAENLYVIKLSLGGDQTKTAVSGIKANFEKSQLIGKKLAVVLNLKPSKFKGVLSEAMILVADDGQATKESLSFLVPSNPQSIEAGSKIAGKGMSIKPKPTIDYQKEFLHYDLTCIDKIISYNKSQLFINQNEPLVSEKIGNGKVR.

Residues 25 to 35 (PYVNNVPHLGN) carry the 'HIGH' region motif. Residues 346 to 350 (KFSKS) carry the 'KMSKS' region motif. Residue K349 participates in ATP binding. The region spanning 573–680 (PEFPIDMKIA…QSIEAGSKIA (108 aa)) is the tRNA-binding domain.

This sequence belongs to the class-I aminoacyl-tRNA synthetase family.

It localises to the cytoplasm. The catalysed reaction is tRNA(Met) + L-methionine + ATP = L-methionyl-tRNA(Met) + AMP + diphosphate. In Dictyostelium discoideum (Social amoeba), this protein is Probable methionine--tRNA ligase, cytoplasmic (metS).